Consider the following 96-residue polypeptide: Small ribosomal subunit protein bS6 (96 aa).

It belongs to the bacterial ribosomal protein bS6 family.

Its function is as follows. Binds together with bS18 to 16S ribosomal RNA. In Synechococcus sp. (strain JA-2-3B'a(2-13)) (Cyanobacteria bacterium Yellowstone B-Prime), this protein is Small ribosomal subunit protein bS6.